A 731-amino-acid polypeptide reads, in one-letter code: Radial spoke head 10 homolog B (731 aa).

The interval 1–69 is disordered; that stretch reads MARGDNMKSS…PNENQPIGEH (69 aa). A compositionally biased stretch (polar residues) spans 7–17; it reads MKSSNKSTPEP. Composition is skewed to low complexity over residues 18–36 and 46–57; these read TLSK…SESV and SSSAVCSASTVS. 10 MORN repeats span residues 86–108, 109–131, 132–154, 155–177, 179–201, 204–226, 227–249, 251–273, 284–306, and 307–329; these read YEGE…GGHV, YKGS…DGLK, YQGD…NGST, YEGE…KTLT, YRGQ…QEAT, YKGE…SGNV, YEGQ…DLDQ, YSGQ…RKRA, YTGD…SGAL, and YCGQ…NGRV. Disordered regions lie at residues 353 to 377 and 709 to 731; these read TTPF…SPLG and KQEQ…TSIH. A compositionally biased stretch (low complexity) spans 363 to 377; the sequence is SKGASQSSSNASPLG. Residues 722–731 are compositionally biased toward polar residues; it reads VTTTSVTSIH.

The protein resides in the cytoplasm. Its subcellular location is the cytoskeleton. It is found in the cilium axoneme. It localises to the cell projection. The protein localises to the cilium. The protein resides in the flagellum. Functionally, may function as part of axonemal radial spoke complexes. Radial spoke complexes are important for ciliary motility. The chain is Radial spoke head 10 homolog B (rsph10b) from Danio rerio (Zebrafish).